A 91-amino-acid polypeptide reads, in one-letter code: Signal peptidase complex subunit 1 (91 aa).

Over Met1–Asp28 the chain is Cytoplasmic. A helical transmembrane segment spans residues Ile29–Leu48. Over Ser49–Thr51 the chain is Lumenal. The chain crosses the membrane as a helical span at residues Leu52–Gly71. Over Lys72–Leu91 the chain is Cytoplasmic.

The protein belongs to the SPCS1 family. In terms of assembly, component of the signal peptidase complex (SPC) composed of a catalytic subunit SEC11 and three accessory subunits SPC1, SPC2 and SPC3. The complex induces a local thinning of the ER membrane which is used to measure the length of the signal peptide (SP) h-region of protein substrates. This ensures the selectivity of the complex towards h-regions shorter than 18-20 amino acids. SPC associates with the translocon complex.

It is found in the endoplasmic reticulum membrane. Component of the signal peptidase complex (SPC) which catalyzes the cleavage of N-terminal signal sequences from nascent proteins as they are translocated into the lumen of the endoplasmic reticulum. Dispensable for SPC enzymatic activity. The protein is Signal peptidase complex subunit 1 (SPC1) of Eremothecium gossypii (strain ATCC 10895 / CBS 109.51 / FGSC 9923 / NRRL Y-1056) (Yeast).